The following is a 319-amino-acid chain: Putative GPI-anchor transamidase (319 aa).

Residues 1–16 (MRHVLLIFCAIIATEA) form the signal peptide. Catalysis depends on residues His156 and Cys198. N-linked (GlcNAc...) asparagine glycosylation occurs at Asn257.

The protein belongs to the peptidase C13 family.

It functions in the pathway glycolipid biosynthesis; glycosylphosphatidylinositol-anchor biosynthesis. In terms of biological role, mediates GPI anchoring in the endoplasmic reticulum, by replacing a protein's C-terminal GPI attachment signal peptide with a pre-assembled GPI. During this transamidation reaction, the GPI transamidase forms a carbonyl intermediate with the substrate protein. This chain is Putative GPI-anchor transamidase, found in Caenorhabditis elegans.